Consider the following 480-residue polypeptide: Trigger factor (480 aa).

One can recognise a PPIase FKBP-type domain in the interval 161-249 (GDRLLITGKF…VVEVLKEQLP (89 aa)). A disordered region spans residues 426–480 (TEEPVEKEAEEKNEEFAIDHEVLPTKDHDAIPAAKYDDNTPKGAETEDKQEKDKD). Basic and acidic residues predominate over residues 429-480 (PVEKEAEEKNEEFAIDHEVLPTKDHDAIPAAKYDDNTPKGAETEDKQEKDKD).

Belongs to the FKBP-type PPIase family. Tig subfamily.

Its subcellular location is the cytoplasm. It catalyses the reaction [protein]-peptidylproline (omega=180) = [protein]-peptidylproline (omega=0). In terms of biological role, involved in protein export. Acts as a chaperone by maintaining the newly synthesized protein in an open conformation. Functions as a peptidyl-prolyl cis-trans isomerase. The sequence is that of Trigger factor from Rhodopirellula baltica (strain DSM 10527 / NCIMB 13988 / SH1).